The primary structure comprises 1649 residues: DNA-directed RNA polymerase subunit beta' (1649 aa).

Positions 63, 65, 78, and 81 each coordinate Zn(2+). Residues D747, D749, and D751 each contribute to the Mg(2+) site. The Zn(2+) site is built by C1078, C1269, C1276, and C1279.

This sequence belongs to the RNA polymerase beta' chain family. In terms of assembly, the RNAP catalytic core consists of 2 alpha, 1 beta, 1 beta' and 1 omega subunit. When a sigma factor is associated with the core the holoenzyme is formed, which can initiate transcription. Mg(2+) is required as a cofactor. The cofactor is Zn(2+).

It carries out the reaction RNA(n) + a ribonucleoside 5'-triphosphate = RNA(n+1) + diphosphate. Functionally, DNA-dependent RNA polymerase catalyzes the transcription of DNA into RNA using the four ribonucleoside triphosphates as substrates. This chain is DNA-directed RNA polymerase subunit beta', found in Thermosipho melanesiensis (strain DSM 12029 / CIP 104789 / BI429).